The sequence spans 167 residues: Iron-sulfur cluster assembly protein 1 (167 aa).

The N-terminal 50 residues, 1–50, are a transit peptide targeting the mitochondrion; it reads MMLKQAAKKALGLTSRQSTPWSVGILRTYHENVIDHYDNPRNVGSFDKND.

Belongs to the NifU family. As to quaternary structure, component of the core Fe-S cluster (ISC) assembly machinery. Interacts with HSCB. It depends on [2Fe-2S] cluster as a cofactor. In terms of tissue distribution, expressed in roots, stems, leaves, flowers, pollen and siliques.

The protein localises to the mitochondrion matrix. The protein resides in the cytoplasm. It localises to the cytosol. Its pathway is cofactor biosynthesis; iron-sulfur cluster biosynthesis. Scaffold protein for the de novo synthesis of iron-sulfur (Fe-S) clusters within mitochondria, which is required for maturation of both mitochondrial and cytoplasmic [2Fe-2S] and [4Fe-4S] proteins. First, a [2Fe-2S] cluster is transiently assembled on the scaffold protein ISCU (ISU1, ISU2 or ISU3). In a second step, the cluster is released from ISCU, transferred to a glutaredoxin, followed by the formation of mitochondrial [2Fe-2S] proteins, the synthesis of [4Fe-4S] clusters and their target-specific insertion into the recipient apoproteins. Cluster assembly on ISCU depends on the function of the cysteine desulfurase complex NFS1-ISD11, which serves as the sulfur donor for cluster synthesis, the iron-binding protein frataxin as the putative iron donor, and the electron transfer chain comprised of ferredoxin reductase and ferredoxin, which receive their electrons from NADH. This is Iron-sulfur cluster assembly protein 1 (ISU1) from Arabidopsis thaliana (Mouse-ear cress).